The primary structure comprises 575 residues: Adenine deaminase 1 (575 aa).

Belongs to the metallo-dependent hydrolases superfamily. Adenine deaminase family. It depends on Mn(2+) as a cofactor.

The catalysed reaction is adenine + H2O + H(+) = hypoxanthine + NH4(+). This chain is Adenine deaminase 1, found in Agrobacterium fabrum (strain C58 / ATCC 33970) (Agrobacterium tumefaciens (strain C58)).